We begin with the raw amino-acid sequence, 139 residues long: Large-conductance mechanosensitive channel (139 aa).

The next 2 membrane-spanning stretches (helical) occupy residues 17–37 (VVDM…VTSL) and 88–108 (TVDF…IMAA).

This sequence belongs to the MscL family. In terms of assembly, homopentamer.

It localises to the cell inner membrane. Channel that opens in response to stretch forces in the membrane lipid bilayer. May participate in the regulation of osmotic pressure changes within the cell. This Porphyromonas gingivalis (strain ATCC 33277 / DSM 20709 / CIP 103683 / JCM 12257 / NCTC 11834 / 2561) protein is Large-conductance mechanosensitive channel.